The primary structure comprises 110 residues: Large ribosomal subunit protein uL22 (110 aa).

It belongs to the universal ribosomal protein uL22 family. As to quaternary structure, part of the 50S ribosomal subunit.

Functionally, this protein binds specifically to 23S rRNA; its binding is stimulated by other ribosomal proteins, e.g. L4, L17, and L20. It is important during the early stages of 50S assembly. It makes multiple contacts with different domains of the 23S rRNA in the assembled 50S subunit and ribosome. In terms of biological role, the globular domain of the protein is located near the polypeptide exit tunnel on the outside of the subunit, while an extended beta-hairpin is found that lines the wall of the exit tunnel in the center of the 70S ribosome. The chain is Large ribosomal subunit protein uL22 from Nitrosomonas europaea (strain ATCC 19718 / CIP 103999 / KCTC 2705 / NBRC 14298).